Consider the following 383-residue polypeptide: 3-ketosteroid-9-alpha-monooxygenase, oxygenase component (383 aa).

A Rieske domain is found at 24 to 126; that stretch reads WHCLGPVKNF…TDVRGGLLFV (103 aa). [2Fe-2S] cluster contacts are provided by cysteine 65, histidine 67, cysteine 84, and histidine 87. Asparagine 173, histidine 179, histidine 184, and aspartate 302 together coordinate Fe cation.

In terms of assembly, homotrimer. The two-component system 3-ketosteroid-9-alpha-monooxygenase is composed of an oxygenase component KshA and a reductase component KshB. [2Fe-2S] cluster is required as a cofactor. It depends on Fe cation as a cofactor.

It catalyses the reaction androsta-1,4-diene-3,17-dione + 2 reduced [2Fe-2S]-[ferredoxin] + O2 + 2 H(+) = 9alpha-hydroxyandrosta-1,4-diene-3,17-dione + 2 oxidized [2Fe-2S]-[ferredoxin] + H2O. Its pathway is lipid metabolism; steroid biosynthesis. Functionally, involved in the degradation of cholesterol. Catalyzes the introduction of a 9a-hydroxyl moiety into 1,4-androstadiene-3,17-dione (ADD) to yield the 9alpha-hydroxy-1,4-androstadiene-3,17-dione (9OHADD) intermediate which spontaneously form 3-hydroxy-9,10-seconandrost-1,3,5(10)-triene-9,17-dione (HSA) via the meta-cleavage of ring B with concomitant aromatization of ring A. The polypeptide is 3-ketosteroid-9-alpha-monooxygenase, oxygenase component (kshA) (Mycolicibacterium smegmatis (strain ATCC 700084 / mc(2)155) (Mycobacterium smegmatis)).